Here is a 70-residue protein sequence, read N- to C-terminus: Myotoxin (70 aa).

A signal peptide spans 1–22 (MKILYLLFAFLFLAFLSEPGNA). 3 cysteine pairs are disulfide-bonded: cysteine 26–cysteine 58, cysteine 33–cysteine 52, and cysteine 40–cysteine 59.

It belongs to the crotamine-myotoxin family. As to quaternary structure, monomer. As to expression, expressed by the venom gland.

Its subcellular location is the secreted. Cationic peptide that possesses multiple functions. It acts as a cell-penetrating peptide (CPP), and as a potent voltage-gated potassium channel (Kv) inhibitor. It exhibits antimicrobial activities, hind limb paralysis, and severe muscle necrosis by a non-enzymatic mechanism. The chain is Myotoxin from Crotalus adamanteus (Eastern diamondback rattlesnake).